Consider the following 140-residue polypeptide: NADPH-dependent 7-cyano-7-deazaguanine reductase (140 aa).

C51 acts as the Thioimide intermediate in catalysis. The active-site Proton donor is the D58. Residues 73–75 and 92–93 contribute to the substrate site; these read LES and HE.

This sequence belongs to the GTP cyclohydrolase I family. QueF type 1 subfamily.

The protein localises to the cytoplasm. It catalyses the reaction 7-aminomethyl-7-carbaguanine + 2 NADP(+) = 7-cyano-7-deazaguanine + 2 NADPH + 3 H(+). The protein operates within tRNA modification; tRNA-queuosine biosynthesis. In terms of biological role, catalyzes the NADPH-dependent reduction of 7-cyano-7-deazaguanine (preQ0) to 7-aminomethyl-7-deazaguanine (preQ1). This Syntrophus aciditrophicus (strain SB) protein is NADPH-dependent 7-cyano-7-deazaguanine reductase.